We begin with the raw amino-acid sequence, 548 residues long: Chaperonin GroEL (548 aa).

ATP is bound by residues 30 to 33, K51, 87 to 91, G415, 479 to 481, and D495; these read TLGP, DGTTT, and NAA.

The protein belongs to the chaperonin (HSP60) family. In terms of assembly, forms a cylinder of 14 subunits composed of two heptameric rings stacked back-to-back. Interacts with the co-chaperonin GroES.

Its subcellular location is the cytoplasm. The enzyme catalyses ATP + H2O + a folded polypeptide = ADP + phosphate + an unfolded polypeptide.. In terms of biological role, together with its co-chaperonin GroES, plays an essential role in assisting protein folding. The GroEL-GroES system forms a nano-cage that allows encapsulation of the non-native substrate proteins and provides a physical environment optimized to promote and accelerate protein folding. This chain is Chaperonin GroEL, found in Klebsiella pneumoniae (strain 342).